The chain runs to 200 residues: MIQYPEPLAKLIESYTKLPGIGQKTATRLAFYTLSMQEDDVTNFAKSLLSAKRDLHNCSICGNITEDDPCPICRDKTRDHSQILVVEQSQDVMAMERMHEYHGLYHVLHGVISPVAGTGPEDINITSLLKRLKKDDEVKEIIIATNASSDGELTAGYLAKLIKPAGIKVTRLAHGLSVGADIDYADEMTLFKAVQGRTEM.

A C4-type zinc finger spans residues 58–73 (CSICGNITEDDPCPIC). The Toprim domain occupies 81-177 (SQILVVEQSQ…KVTRLAHGLS (97 aa)).

It belongs to the RecR family.

Functionally, may play a role in DNA repair. It seems to be involved in an RecBC-independent recombinational process of DNA repair. It may act with RecF and RecO. The chain is Recombination protein RecR from Limosilactobacillus reuteri (strain DSM 20016) (Lactobacillus reuteri).